A 595-amino-acid polypeptide reads, in one-letter code: Putative capsid protein V20 (595 aa).

The protein localises to the virion. May self assemble to form an icosahedral capsid. Most abundant protein in the virion. The polypeptide is Putative capsid protein V20 (Sputnik virophage).